Reading from the N-terminus, the 258-residue chain is L-aspartate dehydrogenase 1 (258 aa).

NAD(+) is bound by residues Ala-121 and Asn-181. The active site involves His-211.

This sequence belongs to the L-aspartate dehydrogenase family.

It catalyses the reaction L-aspartate + NADP(+) + H2O = oxaloacetate + NH4(+) + NADPH + H(+). The catalysed reaction is L-aspartate + NAD(+) + H2O = oxaloacetate + NH4(+) + NADH + H(+). The protein operates within cofactor biosynthesis; NAD(+) biosynthesis; iminoaspartate from L-aspartate (dehydrogenase route): step 1/1. Specifically catalyzes the NAD or NADP-dependent dehydrogenation of L-aspartate to iminoaspartate. The polypeptide is L-aspartate dehydrogenase 1 (Bordetella parapertussis (strain 12822 / ATCC BAA-587 / NCTC 13253)).